The following is a 61-amino-acid chain: Large ribosomal subunit protein uL30 (61 aa).

The protein belongs to the universal ribosomal protein uL30 family. As to quaternary structure, part of the 50S ribosomal subunit.

The polypeptide is Large ribosomal subunit protein uL30 (Bordetella avium (strain 197N)).